We begin with the raw amino-acid sequence, 164 residues long: Putative histone H2B type 2-D (164 aa).

The span at 1–12 shows a compositional bias: low complexity; it reads MPEPAKFAPAPK. Positions 1-33 are disordered; sequence MPEPAKFAPAPKKGSKKAVTKAQKKDGKKRKRS. Pro-2 is subject to N-acetylproline. At Lys-6 the chain carries N6-(2-hydroxyisobutyryl)lysine; alternate. N6-(beta-hydroxybutyryl)lysine; alternate is present on residues Lys-6 and Lys-12. An N6-acetyllysine; alternate mark is found at Lys-6, Lys-12, and Lys-13. An N6-butyryllysine; alternate modification is found at Lys-6. N6-crotonyllysine; alternate occurs at positions 6, 12, and 13. Lys-6 and Lys-12 each carry N6-lactoyllysine; alternate. Residue Lys-6 forms a Glycyl lysine isopeptide (Lys-Gly) (interchain with G-Cter in SUMO2); alternate linkage. Lys-13 is modified (N6-(2-hydroxyisobutyryl)lysine; alternate). Ser-15 is subject to Phosphoserine; by STK4/MST1. N6-acetyllysine; alternate occurs at positions 16, 17, 21, and 24. N6-crotonyllysine; alternate is present on residues Lys-16, Lys-17, Lys-21, and Lys-24. Lys-16, Lys-17, Lys-21, and Lys-24 each carry N6-lactoyllysine; alternate. An N6-(beta-hydroxybutyryl)lysine; alternate mark is found at Lys-17 and Lys-21. The residue at position 17 (Lys-17) is an N6-glutaryllysine; alternate. An N6-(2-hydroxyisobutyryl)lysine; alternate mark is found at Lys-21 and Lys-24. Lys-21 carries the N6-butyryllysine; alternate modification. Lys-21 is covalently cross-linked (Glycyl lysine isopeptide (Lys-Gly) (interchain with G-Cter in SUMO2); alternate). Lys-25 carries the N6-(2-hydroxyisobutyryl)lysine modification. N6-(2-hydroxyisobutyryl)lysine; alternate is present on Lys-35. At Lys-35 the chain carries N6-(beta-hydroxybutyryl)lysine; alternate. Residue Lys-35 is modified to N6-crotonyllysine; alternate. Lys-35 is modified (N6-glutaryllysine; alternate). The residue at position 35 (Lys-35) is an N6-succinyllysine; alternate. Lys-35 participates in a covalent cross-link: Glycyl lysine isopeptide (Lys-Gly) (interchain with G-Cter in ubiquitin); alternate. The residue at position 37 (Ser-37) is a Phosphoserine; by AMPK. An N6-(2-hydroxyisobutyryl)lysine; alternate mark is found at Lys-44, Lys-47, and Lys-58. Lys-44 carries the N6-lactoyllysine; alternate modification. Residues Lys-44 and Lys-47 each carry the N6-glutaryllysine; alternate modification. At Lys-47 the chain carries N6-methyllysine; alternate. An N6,N6-dimethyllysine; alternate modification is found at Lys-58. Arg-80 carries the post-translational modification Dimethylated arginine. Lys-86 is subject to N6-(2-hydroxyisobutyryl)lysine; alternate. Lys-86 is modified (N6-(beta-hydroxybutyryl)lysine; alternate). The residue at position 86 (Lys-86) is an N6-acetyllysine; alternate. Residue Lys-86 is modified to N6-lactoyllysine; alternate. At Lys-86 the chain carries N6,N6,N6-trimethyllysine; alternate. An omega-N-methylarginine mark is found at Arg-87 and Arg-93. Residues 111 to 140 are disordered; it reads PCPRAPRRSPSTPAPSESLPGPGARSLPPS.

Belongs to the histone H2B family. In terms of assembly, the nucleosome is a histone octamer containing two molecules each of H2A, H2B, H3 and H4 assembled in one H3-H4 heterotetramer and two H2A-H2B heterodimers. The octamer wraps approximately 147 bp of DNA. Post-translationally, phosphorylation at Ser-37 (H2BS36ph) by AMPK in response to stress promotes transcription. Phosphorylated on Ser-15 (H2BS14ph) by STK4/MST1 during apoptosis; which facilitates apoptotic chromatin condensation. Also phosphorylated on Ser-15 in response to DNA double strand breaks (DSBs), and in correlation with somatic hypermutation and immunoglobulin class-switch recombination. Crotonylation (Kcr) is specifically present in male germ cells and marks testis-specific genes in post-meiotic cells, including X-linked genes that escape sex chromosome inactivation in haploid cells. Crotonylation marks active promoters and enhancers and confers resistance to transcriptional repressors. It is also associated with post-meiotically activated genes on autosomes. In terms of processing, lactylated in macrophages by EP300/P300 by using lactoyl-CoA directly derived from endogenous or exogenous lactate, leading to stimulates gene transcription.

It localises to the nucleus. The protein resides in the chromosome. Its function is as follows. Core component of nucleosome. Nucleosomes wrap and compact DNA into chromatin, limiting DNA accessibility to the cellular machineries which require DNA as a template. Histones thereby play a central role in transcription regulation, DNA repair, DNA replication and chromosomal stability. DNA accessibility is regulated via a complex set of post-translational modifications of histones, also called histone code, and nucleosome remodeling. The protein is Putative histone H2B type 2-D of Homo sapiens (Human).